Consider the following 548-residue polypeptide: MFS-type transporter TOXA (548 aa).

Positions 1 to 12 (MDEQIVSASSNV) are enriched in polar residues. The segment at 1 to 33 (MDEQIVSASSNVKDGVEKQPVKDREDVDANVVP) is disordered. The span at 14-27 (DGVEKQPVKDREDV) shows a compositional bias: basic and acidic residues. 14 helical membrane passes run 43–63 (ISLI…FLGA), 85–105 (AVAW…PLFG), 114–134 (KWLF…CALA), 146–166 (VAGI…ALIV), 177–197 (MIGA…GAIA), 204–224 (WCFW…LFFF), 250–270 (IGAG…QWGG), 280–300 (VVAL…HQYW), 316–336 (GFLL…AALY), 357–377 (MLPI…TISF), 382–402 (APFI…LYTF), 411–431 (IIGY…QAFI), 444–464 (YASA…LCVC), and 518–538 (FLVA…LSWA).

It belongs to the major facilitator superfamily. TCR/Tet family.

The protein localises to the membrane. Its function is as follows. MFS-type transporter; part of the diffuse TOX2 gene cluster that mediates the biosynthesis of the HC-toxin, cyclic tetrapeptide of structure cyclo(D-Pro-L-Ala-D-Ala-L-Aeo), where Aeo stands for 2-amino-9,10-epoxi-8-oxodecanoic acid. HC-toxin is a determinant of specificity and virulence in the interaction between the producing fungus and its host, maize. TOXA acts as a HC-toxin efflux pump which contributes to self-protection against HC-toxin and/or the secretion of HC-toxin into the extracellular milieu. In Cochliobolus carbonum (Maize leaf spot fungus), this protein is MFS-type transporter TOXA.